Consider the following 346-residue polypeptide: Ferredoxin--NADP reductase (346 aa).

Residues E35, Q43, Y48, V88, F122, D287, and T327 each coordinate FAD.

It belongs to the ferredoxin--NADP reductase type 2 family. In terms of assembly, homodimer. FAD serves as cofactor.

The catalysed reaction is 2 reduced [2Fe-2S]-[ferredoxin] + NADP(+) + H(+) = 2 oxidized [2Fe-2S]-[ferredoxin] + NADPH. In Oenococcus oeni (strain ATCC BAA-331 / PSU-1), this protein is Ferredoxin--NADP reductase.